The chain runs to 266 residues: Gap junction beta-4 protein (266 aa).

An intramembrane segment occupies 2–13 (NWGFLQGILSGV). The Cytoplasmic segment spans residues 14 to 20 (NKYSTAL). A helical membrane pass occupies residues 21-40 (GRIWLSVVFIFRVLVYVVAA). The Extracellular segment spans residues 41–73 (EEVWDDDQKDFICNTKQPGCPNVCYDEFFPVSH). Cystine bridges form between Cys53–Cys175, Cys60–Cys169, and Cys64–Cys164. The chain crosses the membrane as a helical span at residues 74–94 (VRLWALQLILVTCPSLLVVMH). The Cytoplasmic portion of the chain corresponds to 95–130 (VAYREERERKHRLKHGPNAPALYSNLSKKRGGLWWT). The chain crosses the membrane as a helical span at residues 131–151 (YLLSLIFKAAVDSGFLYIFHC). The Extracellular portion of the chain corresponds to 152 to 184 (IYKDYDMPRVVACSVTPCPHTVDCYIARPTEKK). Residues 185–205 (VFTYFMVVTAAICILLNLSEV) form a helical membrane-spanning segment. Residues 206–266 (VYLVGKRCME…MATVDAGVYP (61 aa)) are Cytoplasmic-facing.

It belongs to the connexin family. Beta-type (group I) subfamily. As to quaternary structure, a hemichannel or connexon is composed of a hexamer of connexins. A functional gap junction is formed by the apposition of two hemichannels. Forms heteromeric channels with GJB2. Detected in cochlea (at protein level). Detected in cochlea. Expressed in skin.

It localises to the cell membrane. The protein resides in the cell junction. Its subcellular location is the gap junction. Functionally, structural component of gap junctions. Gap junctions are dodecameric channels that connect the cytoplasm of adjoining cells. They are formed by the docking of two hexameric hemichannels, one from each cell membrane. Small molecules and ions diffuse from one cell to a neighboring cell via the central pore. This Mus musculus (Mouse) protein is Gap junction beta-4 protein (Gjb4).